Reading from the N-terminus, the 934-residue chain is 2-oxoglutarate dehydrogenase E1 component (934 aa).

It belongs to the alpha-ketoglutarate dehydrogenase family. As to quaternary structure, homodimer. Part of the 2-oxoglutarate dehydrogenase (OGDH) complex composed of E1 (2-oxoglutarate dehydrogenase), E2 (dihydrolipoamide succinyltransferase) and E3 (dihydrolipoamide dehydrogenase); the complex contains multiple copies of the three enzymatic components (E1, E2 and E3). It depends on thiamine diphosphate as a cofactor.

It carries out the reaction N(6)-[(R)-lipoyl]-L-lysyl-[protein] + 2-oxoglutarate + H(+) = N(6)-[(R)-S(8)-succinyldihydrolipoyl]-L-lysyl-[protein] + CO2. In terms of biological role, E1 component of the 2-oxoglutarate dehydrogenase (OGDH) complex which catalyzes the decarboxylation of 2-oxoglutarate, the first step in the conversion of 2-oxoglutarate to succinyl-CoA and CO(2). The chain is 2-oxoglutarate dehydrogenase E1 component (sucA) from Coxiella burnetii (strain RSA 493 / Nine Mile phase I).